Reading from the N-terminus, the 144-residue chain is Flagellar assembly factor FliW (144 aa).

The protein belongs to the FliW family. As to quaternary structure, monomer. One copy interacts with the each alpha-helical wing of the CsrA homodimer, yielding a FliW-CsrA(2)-FliW complex. Comparison with a CsrA-mRNA structure (2JPP) suggests CsrA cannot bind both mRNA and FliW at the same time. Interacts with flagellin.

The protein localises to the cytoplasm. Its function is as follows. Acts as an anti-CsrA protein, binds CsrA and prevents it from repressing translation of its target genes, one of which is flagellin. Binds to flagellin and participates in the assembly of the flagellum. Functionally, allosterically inhibits CsrA binding to mRNA in a non-competitive fashion by preventing CsrA binding to the 5'-UTR. This Geobacillus thermodenitrificans (strain NG80-2) protein is Flagellar assembly factor FliW.